We begin with the raw amino-acid sequence, 281 residues long: Insecticidal crystal toxin protein (281 aa).

Antigenic epitope stretches follow at residues 54–78 (NYSH…VYTF), 91–104 (IYTH…AVKA), 108–116 (GTASKVVQG), 131–148 (FKIT…FIRI), 160–172 (AVIN…VAEL), 189–196 (KYKDFQYL), 208–216 (QNISLVFNR), 221–236 (TNTT…LPIT), and 247–256 (KLETVQQIIN).

The protein belongs to the delta endotoxin family.

Its function is as follows. Promotes colloidosmotic lysis by binding to the midgut epithelial cells of insects. Active against Mamestra brassicae. This chain is Insecticidal crystal toxin protein, found in Bacillus thuringiensis subsp. kurstaki.